Reading from the N-terminus, the 404-residue chain is MQYSEIMIRYGELSTKGKNRMRFINKLRNNISDVLSIYPQVKVTADRDRAHAYLNGADYTAVAESLKQVFGIQNFSPVYKVEKSVEVLKSAVQEIMRDIYKEGMTFKISSKRSDHNFELDSRELNQTLGGAVFEAIPNVQVQMKSPDINLQVEIREEAAYLSYETIRGAGGLPVGTSGKGMLMLSGGIDSPVAGYLALKRGVDIEAVHFASPPYTSPGALKKAQDLTRKLTKFGGNIQFIEVPFTEIQEEIKAKAPEAYLMTLTRRFMMRITDRIREVRNGLVIINGESLGQVASQTLESMKAINAVTNTPIIRPVVTMDKLEIIDIAQEIDTFDISIQPFEDCCTIFAPDRPKTNPKIKNAEQYEARMDVEGLVERAVAGIMITEITPQAEKDEVDDLIDNLL.

The THUMP domain occupies 60 to 165 (TAVAESLKQV…EEAAYLSYET (106 aa)). Residues 183-184 (ML), 208-209 (HF), Arg-265, Gly-287, and Gln-296 each bind ATP.

It belongs to the ThiI family.

It localises to the cytoplasm. The enzyme catalyses [ThiI sulfur-carrier protein]-S-sulfanyl-L-cysteine + a uridine in tRNA + 2 reduced [2Fe-2S]-[ferredoxin] + ATP + H(+) = [ThiI sulfur-carrier protein]-L-cysteine + a 4-thiouridine in tRNA + 2 oxidized [2Fe-2S]-[ferredoxin] + AMP + diphosphate. It catalyses the reaction [ThiS sulfur-carrier protein]-C-terminal Gly-Gly-AMP + S-sulfanyl-L-cysteinyl-[cysteine desulfurase] + AH2 = [ThiS sulfur-carrier protein]-C-terminal-Gly-aminoethanethioate + L-cysteinyl-[cysteine desulfurase] + A + AMP + 2 H(+). The protein operates within cofactor biosynthesis; thiamine diphosphate biosynthesis. Its function is as follows. Catalyzes the ATP-dependent transfer of a sulfur to tRNA to produce 4-thiouridine in position 8 of tRNAs, which functions as a near-UV photosensor. Also catalyzes the transfer of sulfur to the sulfur carrier protein ThiS, forming ThiS-thiocarboxylate. This is a step in the synthesis of thiazole, in the thiamine biosynthesis pathway. The sulfur is donated as persulfide by IscS. The polypeptide is Probable tRNA sulfurtransferase (Streptococcus pneumoniae (strain 70585)).